Consider the following 414-residue polypeptide: Nucleoredoxin (414 aa).

A Thioredoxin domain is found at 131–305 (LLVKDDPEGL…ELNAVQLNEG (175 aa)).

This sequence belongs to the nucleoredoxin family.

The protein localises to the cytoplasm. It localises to the cytosol. Its subcellular location is the nucleus. It catalyses the reaction [protein]-dithiol + NAD(+) = [protein]-disulfide + NADH + H(+). It carries out the reaction [protein]-dithiol + NADP(+) = [protein]-disulfide + NADPH + H(+). Functionally, functions as a redox-dependent negative regulator of the Wnt signaling pathway. This is Nucleoredoxin (nxn) from Xenopus laevis (African clawed frog).